Here is a 145-residue protein sequence, read N- to C-terminus: D-aminoacyl-tRNA deacylase (145 aa).

Residues 137 to 138 (GP) carry the Gly-cisPro motif, important for rejection of L-amino acids motif.

This sequence belongs to the DTD family. As to quaternary structure, homodimer.

The protein localises to the cytoplasm. The enzyme catalyses glycyl-tRNA(Ala) + H2O = tRNA(Ala) + glycine + H(+). The catalysed reaction is a D-aminoacyl-tRNA + H2O = a tRNA + a D-alpha-amino acid + H(+). An aminoacyl-tRNA editing enzyme that deacylates mischarged D-aminoacyl-tRNAs. Also deacylates mischarged glycyl-tRNA(Ala), protecting cells against glycine mischarging by AlaRS. Acts via tRNA-based rather than protein-based catalysis; rejects L-amino acids rather than detecting D-amino acids in the active site. By recycling D-aminoacyl-tRNA to D-amino acids and free tRNA molecules, this enzyme counteracts the toxicity associated with the formation of D-aminoacyl-tRNA entities in vivo and helps enforce protein L-homochirality. The chain is D-aminoacyl-tRNA deacylase from Shewanella piezotolerans (strain WP3 / JCM 13877).